Reading from the N-terminus, the 466-residue chain is F-box/LRR-repeat protein fbxl-1 (466 aa).

The region spanning 54 to 100 (SLINRVLPKEVLLKVFSFLDTKALCRSAQVCRSWSILALDGSNWQRV) is the F-box domain. 11 LRR repeats span residues 122-147 (GGFLKELSLKGCENVHDSALRTFTSR), 148-173 (CPNLEHLSLYRCKRVTDASCENLGRY), 174-199 (CHKLNYLNLENCSSITDRAMKYIGDG), 200-225 (CPNLSYLNISWCDAIQDRGVQIILSN), 226-251 (CKSLDTLILRGCEGLTENVFGSVEAH), 252-277 (MGAIKKLNLLQCFQLTDITVQNIANG), 278-303 (ATALEYLCMSNCNQISDRSLVSLGQH), 304-329 (SHNLKVLELSGCTLLGDNGFIPLARG), 330-355 (CRQLERLDMEDCSLISDHTINSLANN), 356-381 (CTALRELSLSHCELITDESIQNLASK), and 408-433 (CKALKRIDLYDCQNVSKEAIVRFQHH).

Component of the SCF (SKP1-CUL1-F-box protein)-type E3 ubiquitin ligase complex. In terms of tissue distribution, expressed in neuroglial cells such as the socket cell and sheath cell, neurosecretory motor neurons and regions around the pharynx and anus.

The protein resides in the perikaryon. It is found in the cell projection. Its subcellular location is the dendrite. The protein localises to the cilium. It localises to the axon. Substrate-recognition component of the SCF (SKP1-CUL1-F-box protein)-type E3 ubiquitin ligase complex. Plays a role in regulating the entry into the dauer state. In hermaphrodites, may play a role in modulating the rate of defecation. The chain is F-box/LRR-repeat protein fbxl-1 from Caenorhabditis elegans.